A 361-amino-acid chain; its full sequence is Aromatic amino acid aminotransferase (361 aa).

The residue at position 221 (lysine 221) is an N6-(pyridoxal phosphate)lysine.

It belongs to the class-II pyridoxal-phosphate-dependent aminotransferase family. Homodimer. Pyridoxal 5'-phosphate serves as cofactor.

The enzyme catalyses an aromatic L-alpha-amino acid + 2-oxoglutarate = an aromatic oxo-acid + L-glutamate. Functionally, aminotransferase that catalyzes the conversion of aromatic amino acids and 2-oxoglutarate into corresponding aromatic oxo acids and L-glutamate. The sequence is that of Aromatic amino acid aminotransferase from Mycobacterium marinum (strain ATCC BAA-535 / M).